A 169-amino-acid chain; its full sequence is uncharacterized protein (169 aa).

A run of 2 helical transmembrane segments spans residues 62 to 84 (RWGF…LLGL) and 94 to 116 (ALML…YWWF).

The protein localises to the cell membrane. This is an uncharacterized protein from Archaeoglobus fulgidus (strain ATCC 49558 / DSM 4304 / JCM 9628 / NBRC 100126 / VC-16).